The following is a 504-amino-acid chain: Probable cytosol aminopeptidase (504 aa).

2 residues coordinate Mn(2+): Lys263 and Asp268. Residue Lys275 is part of the active site. 3 residues coordinate Mn(2+): Asp286, Asp345, and Glu347. Arg349 is a catalytic residue.

This sequence belongs to the peptidase M17 family. It depends on Mn(2+) as a cofactor.

Its subcellular location is the cytoplasm. The enzyme catalyses Release of an N-terminal amino acid, Xaa-|-Yaa-, in which Xaa is preferably Leu, but may be other amino acids including Pro although not Arg or Lys, and Yaa may be Pro. Amino acid amides and methyl esters are also readily hydrolyzed, but rates on arylamides are exceedingly low.. The catalysed reaction is Release of an N-terminal amino acid, preferentially leucine, but not glutamic or aspartic acids.. Its function is as follows. Presumably involved in the processing and regular turnover of intracellular proteins. Catalyzes the removal of unsubstituted N-terminal amino acids from various peptides. The sequence is that of Probable cytosol aminopeptidase from Sulfurihydrogenibium sp. (strain YO3AOP1).